Here is a 265-residue protein sequence, read N- to C-terminus: Putative hydro-lyase PA14_37210 (265 aa).

It belongs to the D-glutamate cyclase family.

The sequence is that of Putative hydro-lyase PA14_37210 from Pseudomonas aeruginosa (strain UCBPP-PA14).